We begin with the raw amino-acid sequence, 751 residues long: Centrosomal protein of 68 kDa (751 aa).

Composition is skewed to basic and acidic residues over residues 1–17 (MALG…EDTK) and 86–96 (ASREPVAERSE). The interval 1 to 253 (MALGEEKAEA…PQPVFSGGDA (253 aa)) is disordered. 2 stretches are compositionally biased toward polar residues: residues 131-144 (LPQT…TTIC) and 163-175 (APSS…SQWK). Over residues 176 to 200 (SMPSPGSAAPQPSSCSVSASSTGSS) the composition is skewed to low complexity. S326 is subject to Phosphoserine. Positions 339–348 (STLKSPTNVF) are enriched in polar residues. Disordered stretches follow at residues 339–474 (STLK…ESDD), 511–545 (SPLE…SGDP), and 590–611 (RLDR…KGGE). Composition is skewed to basic and acidic residues over residues 399–416 (GSRD…RGAK) and 433–450 (RTRD…EKRT). A compositionally biased stretch (polar residues) spans 451–461 (SQSARRPTCTE). Phosphoserine is present on residues S466 and S472. The span at 520–537 (GPASLPSSSSQSQLPPGA) shows a compositional bias: low complexity.

As to quaternary structure, interacts with CNTLN; the interaction recruits CEP68 to the centrosome. Interacts with the SCF(FBXW11) complex which contains SKP1, CUL1 and FBXW11; the interaction is probably mediated by FBXW11 and the complex also contains CDK5RAP2 and PCNT. Also interacts with F-box protein BTRC. Interacts with serine/threonine-protein kinase PLK1; the interaction leads to phosphorylation of CEP68 and its subsequent degradation. Interacts with NEK2; the interaction leads to phosphorylation of CEP68. In terms of processing, phosphorylation by PLK1 is required for binding to BTRC in prometaphase. Phosphorylated directly or indirectly by NEK2. NEK2-mediated phosphorylation promotes CEP68 dissociation from the centrosome and its degradation at the onset of mitosis. Ubiquitinated and targeted for proteasomal degradation in early mitosis by the SCF(BTRC) and/or SCF(FBXW11) E3 ubiquitin-protein ligase complexes. Degradation is complete by prometaphase and is required for removal of CDK5RAP2 from the peripheral pericentriolar material and subsequent centriole separation.

It localises to the cytoplasm. It is found in the cytoskeleton. The protein localises to the microtubule organizing center. The protein resides in the centrosome. In terms of biological role, involved in maintenance of centrosome cohesion, probably as part of a linker structure which prevents centrosome splitting. Required for localization of CDK5RAP2 to the centrosome during interphase. Contributes to CROCC/rootletin filament formation. The sequence is that of Centrosomal protein of 68 kDa (CEP68) from Pongo abelii (Sumatran orangutan).